The following is a 358-amino-acid chain: Putative glycylpeptide N-tetradecanoyltransferase (358 aa).

This sequence belongs to the NMT family.

It carries out the reaction N-terminal glycyl-[protein] + tetradecanoyl-CoA = N-tetradecanoylglycyl-[protein] + CoA + H(+). In terms of biological role, adds a myristoyl group to the N-terminal glycine residue of certain proteins. This is Putative glycylpeptide N-tetradecanoyltransferase from Acanthamoeba polyphaga (Amoeba).